The primary structure comprises 402 residues: Phosphoglycerate kinase (402 aa).

Substrate contacts are provided by residues 29 to 31 (DFN), Arg-45, 69 to 72 (HLGR), Arg-125, and Arg-158. ATP is bound by residues Lys-209, Glu-331, and 357–360 (GGDT).

This sequence belongs to the phosphoglycerate kinase family.

It localises to the cytoplasm. It carries out the reaction (2R)-3-phosphoglycerate + ATP = (2R)-3-phospho-glyceroyl phosphate + ADP. The protein operates within carbohydrate degradation; glycolysis; pyruvate from D-glyceraldehyde 3-phosphate: step 2/5. In Helicobacter pylori (strain J99 / ATCC 700824) (Campylobacter pylori J99), this protein is Phosphoglycerate kinase (pgk).